A 154-amino-acid chain; its full sequence is Superoxide dismutase [Cu-Zn] (154 aa).

His-47, His-49, and His-64 together coordinate Cu cation. A disulfide bridge connects residues Cys-58 and Cys-147. Residues His-64, His-72, His-81, and Asp-84 each coordinate Zn(2+). Residue His-121 participates in Cu cation binding. A substrate-binding site is contributed by Arg-144.

Belongs to the Cu-Zn superoxide dismutase family. Homodimer. Cu cation serves as cofactor. It depends on Zn(2+) as a cofactor.

Its subcellular location is the cytoplasm. It carries out the reaction 2 superoxide + 2 H(+) = H2O2 + O2. Functionally, destroys radicals which are normally produced within the cells and which are toxic to biological systems. In Schizosaccharomyces pombe (strain 972 / ATCC 24843) (Fission yeast), this protein is Superoxide dismutase [Cu-Zn] (sod1).